Reading from the N-terminus, the 205-residue chain is Thymidylate kinase (205 aa).

7 to 14 (GIDGSGKT) is an ATP binding site.

It belongs to the thymidylate kinase family.

The catalysed reaction is dTMP + ATP = dTDP + ADP. Functionally, phosphorylation of dTMP to form dTDP in both de novo and salvage pathways of dTTP synthesis. The sequence is that of Thymidylate kinase from Wolbachia sp. subsp. Brugia malayi (strain TRS).